Reading from the N-terminus, the 643-residue chain is Threonine--tRNA ligase (643 aa).

The TGS domain occupies 1 to 61; the sequence is MPIITLPDGS…EQDATLEIIT (61 aa). The segment at 243-534 is catalytic; that stretch reads DHRKIGKALD…ITEEYAGFFP (292 aa). Zn(2+) contacts are provided by cysteine 334, histidine 385, and histidine 511.

Belongs to the class-II aminoacyl-tRNA synthetase family. Homodimer. The cofactor is Zn(2+).

Its subcellular location is the cytoplasm. The catalysed reaction is tRNA(Thr) + L-threonine + ATP = L-threonyl-tRNA(Thr) + AMP + diphosphate + H(+). Its function is as follows. Catalyzes the attachment of threonine to tRNA(Thr) in a two-step reaction: L-threonine is first activated by ATP to form Thr-AMP and then transferred to the acceptor end of tRNA(Thr). Also edits incorrectly charged L-seryl-tRNA(Thr). This is Threonine--tRNA ligase from Haemophilus influenzae (strain PittGG).